The sequence spans 211 residues: MPTIIMDSCNYTRLGLTEYMTVKGVKKKNISLINDIAQLQNKCQQLKPGVVLINEDCFIHESDASERIRKIILQHPDTLFFIFMAISNIHFEEYLYVRNNLIITSKAIKISTLDSLLNGYFQKKLNLSVRHGTHSEVHPFTLSQTESNMLKMWMSGHDTIQISDKMQIKAKTVSSHKGNIKRKIKTHNKQVIYHVVRLTDNVTSGIYVNER.

Positions Ser135–Asp200 constitute an HTH luxR-type domain. The segment at residues Thr159–Gly178 is a DNA-binding region (H-T-H motif).

This sequence belongs to the RcsA family.

Functionally, component of the Rcs signaling system, which controls transcription of numerous genes. Binds to DNA to regulate expression of genes. This Erwinia amylovora (Fire blight bacteria) protein is Transcriptional regulatory protein RcsA.